We begin with the raw amino-acid sequence, 324 residues long: MSVSAAVAAASTSRTLVLARHRSPPASRVAATSRGRPFSSGPHPLAVSPATRAPAMATDGAAAAAAAGSKKKKEVLIFDAEEDLAVSLAKYTAELSAKLAAERGAFTVVLSGGSLIKNIRKLAEPPYLDSVDWSKWHVFWVDERVVPKDHEDSNYKLALDGFLSKVPIPTGQVYAINDALSAEGAADDYETCLKQLVKNGVIAMSQSTGFPRFDVMLLGMGPDGHIASLFPGHPLVNENKKWVTYIKDSPKPPPERITFTFPVINSSAYVAMVVTGAGKAGAVQKALSDKQTSSDLLPVEMAVLQDGEFTWFTDKPAVSMLQNK.

Residues 1 to 63 (MSVSAAVAAA…PAMATDGAAA (63 aa)) constitute a chloroplast transit peptide. The interval 19-43 (ARHRSPPASRVAATSRGRPFSSGPH) is disordered.

It belongs to the glucosamine/galactosamine-6-phosphate isomerase family. 6-phosphogluconolactonase subfamily.

The protein resides in the plastid. It is found in the chloroplast. The enzyme catalyses 6-phospho-D-glucono-1,5-lactone + H2O = 6-phospho-D-gluconate + H(+). It functions in the pathway carbohydrate degradation; pentose phosphate pathway; D-ribulose 5-phosphate from D-glucose 6-phosphate (oxidative stage): step 2/3. Functionally, hydrolysis of 6-phosphogluconolactone to 6-phosphogluconate. This Oryza sativa subsp. japonica (Rice) protein is Probable 6-phosphogluconolactonase 4, chloroplastic.